Consider the following 218-residue polypeptide: Monomethylamine corrinoid protein 1 (218 aa).

In terms of domain architecture, B12-binding N-terminal spans 1–91 (MANQEIFDKL…ELEKTKVEGE (91 aa)). Residues 94 to 218 (TGLAITFVAE…AAKVALNIMK (125 aa)) enclose the B12-binding domain. H107 contributes to the methylcob(III)alamin binding site.

Belongs to the methylamine corrinoid protein family. As to quaternary structure, can form a complex with MtmB.

The protein operates within one-carbon metabolism; methanogenesis from methylamine. Its function is as follows. Acts as a methyl group carrier between MtmB and MtbA. The protein is Monomethylamine corrinoid protein 1 (mtmC1) of Methanosarcina mazei (strain ATCC BAA-159 / DSM 3647 / Goe1 / Go1 / JCM 11833 / OCM 88) (Methanosarcina frisia).